Reading from the N-terminus, the 136-residue chain is Frataxin, mitochondrial (136 aa).

The protein belongs to the frataxin family. As to quaternary structure, monomer. Oligomer.

The protein localises to the mitochondrion. The enzyme catalyses 4 Fe(2+) + O2 + 4 H(+) = 4 Fe(3+) + 2 H2O. In terms of biological role, promotes the biosynthesis of heme as well as the assembly and repair of iron-sulfur clusters by delivering Fe(2+) to proteins involved in these pathways. May play a role in the protection against iron-catalyzed oxidative stress through its ability to catalyze the oxidation of Fe(2+) to Fe(3+). May be able to store large amounts of the metal in the form of a ferrihydrite mineral by oligomerization. The sequence is that of Frataxin, mitochondrial (frh-1) from Caenorhabditis elegans.